A 310-amino-acid chain; its full sequence is 4-hydroxyproline 2-epimerase (310 aa).

Cys-88 acts as the Proton acceptor in catalysis. Residues 89-90 (GH), His-208, and Asp-232 each bind substrate. Cys-236 (proton donor) is an active-site residue. 237 to 238 (GT) provides a ligand contact to substrate.

It belongs to the proline racemase family.

It catalyses the reaction trans-4-hydroxy-L-proline = cis-4-hydroxy-D-proline. In terms of biological role, catalyzes the epimerization of trans-4-hydroxy-L-proline (t4LHyp) to cis-4-hydroxy-D-proline (c4DHyp). Is likely involved in a degradation pathway that converts t4LHyp to alpha-ketoglutarate. Displays no proline racemase activity. The protein is 4-hydroxyproline 2-epimerase of Pseudomonas fluorescens (strain ATCC BAA-477 / NRRL B-23932 / Pf-5).